Here is a 375-residue protein sequence, read N- to C-terminus: Queuine tRNA-ribosyltransferase (375 aa).

Catalysis depends on Asp94, which acts as the Proton acceptor. Residues 94–98 (DSGGF), Asp148, Gln191, and Gly218 each bind substrate. The tract at residues 249–255 (GVGSPDD) is RNA binding. Asp268 serves as the catalytic Nucleophile. The tract at residues 273–277 (TRIAR) is RNA binding; important for wobble base 34 recognition. Zn(2+) contacts are provided by Cys306, Cys308, Cys311, and His337.

The protein belongs to the queuine tRNA-ribosyltransferase family. In terms of assembly, homodimer. Within each dimer, one monomer is responsible for RNA recognition and catalysis, while the other monomer binds to the replacement base PreQ1. Requires Zn(2+) as cofactor.

It catalyses the reaction 7-aminomethyl-7-carbaguanine + guanosine(34) in tRNA = 7-aminomethyl-7-carbaguanosine(34) in tRNA + guanine. It functions in the pathway tRNA modification; tRNA-queuosine biosynthesis. Functionally, catalyzes the base-exchange of a guanine (G) residue with the queuine precursor 7-aminomethyl-7-deazaguanine (PreQ1) at position 34 (anticodon wobble position) in tRNAs with GU(N) anticodons (tRNA-Asp, -Asn, -His and -Tyr). Catalysis occurs through a double-displacement mechanism. The nucleophile active site attacks the C1' of nucleotide 34 to detach the guanine base from the RNA, forming a covalent enzyme-RNA intermediate. The proton acceptor active site deprotonates the incoming PreQ1, allowing a nucleophilic attack on the C1' of the ribose to form the product. After dissociation, two additional enzymatic reactions on the tRNA convert PreQ1 to queuine (Q), resulting in the hypermodified nucleoside queuosine (7-(((4,5-cis-dihydroxy-2-cyclopenten-1-yl)amino)methyl)-7-deazaguanosine). This is Queuine tRNA-ribosyltransferase from Thermoanaerobacter sp. (strain X514).